The sequence spans 279 residues: Orotidine 5'-phosphate decarboxylase (279 aa).

Residues aspartate 8, lysine 30, 58-67 (DLKFHDIPNT), threonine 117, arginine 177, glutamine 186, glycine 206, and arginine 207 each bind substrate. Lysine 60 serves as the catalytic Proton donor.

This sequence belongs to the OMP decarboxylase family. Type 1 subfamily. Homodimer.

The catalysed reaction is orotidine 5'-phosphate + H(+) = UMP + CO2. Its pathway is pyrimidine metabolism; UMP biosynthesis via de novo pathway; UMP from orotate: step 2/2. Catalyzes the decarboxylation of orotidine 5'-monophosphate (OMP) to uridine 5'-monophosphate (UMP). The chain is Orotidine 5'-phosphate decarboxylase from Campylobacter jejuni subsp. jejuni serotype O:2 (strain ATCC 700819 / NCTC 11168).